Reading from the N-terminus, the 201-residue chain is Small ribosomal subunit protein uS4 (201 aa).

A disordered region spans residues 21–43 (GTGKELNRRPYAPGDHGQGRRQK). The S4 RNA-binding domain maps to 93 to 153 (RRLDNMVYRL…EKSKDMAIIK (61 aa)).

Belongs to the universal ribosomal protein uS4 family. In terms of assembly, part of the 30S ribosomal subunit. Contacts protein S5. The interaction surface between S4 and S5 is involved in control of translational fidelity.

One of the primary rRNA binding proteins, it binds directly to 16S rRNA where it nucleates assembly of the body of the 30S subunit. In terms of biological role, with S5 and S12 plays an important role in translational accuracy. In Levilactobacillus brevis (strain ATCC 367 / BCRC 12310 / CIP 105137 / JCM 1170 / LMG 11437 / NCIMB 947 / NCTC 947) (Lactobacillus brevis), this protein is Small ribosomal subunit protein uS4.